Consider the following 418-residue polypeptide: Putative ion-transport protein YfeO (418 aa).

12 helical membrane-spanning segments follow: residues 10–30 (LLLS…LIVV), 54–74 (DSPF…GLVI), 99–119 (ALPG…SLGP), 120–140 (EHPI…RLLP), 149–169 (ILAS…AALI), 186–206 (LFAP…FFHP), 223–243 (ILSG…AVWC), 258–278 (VLML…AGPV), 300–320 (DYFL…ASGF), 322–342 (GGRI…LHEH), 343–363 (VPAV…VLVV), and 386–406 (LLCI…IMMV).

This sequence belongs to the chloride channel (TC 2.A.49) family.

It localises to the cell membrane. The chain is Putative ion-transport protein YfeO from Escherichia fergusonii (strain ATCC 35469 / DSM 13698 / CCUG 18766 / IAM 14443 / JCM 21226 / LMG 7866 / NBRC 102419 / NCTC 12128 / CDC 0568-73).